The chain runs to 152 residues: Superoxide dismutase [Cu-Zn] (152 aa).

Cu cation contacts are provided by His45, His47, and His62. Cys56 and Cys145 are joined by a disulfide. Zn(2+) is bound by residues His62, His70, His79, and Asp82. His119 provides a ligand contact to Cu cation.

The protein belongs to the Cu-Zn superoxide dismutase family. Homodimer. Cu cation is required as a cofactor. Requires Zn(2+) as cofactor.

The protein localises to the cytoplasm. The catalysed reaction is 2 superoxide + 2 H(+) = H2O2 + O2. Its function is as follows. Destroys radicals which are normally produced within the cells and which are toxic to biological systems. This is Superoxide dismutase [Cu-Zn] (SODCC) from Pisum sativum (Garden pea).